The chain runs to 352 residues: N-acetyl-gamma-glutamyl-phosphate reductase (352 aa).

C156 is an active-site residue.

It belongs to the NAGSA dehydrogenase family. Type 1 subfamily.

The protein resides in the cytoplasm. The catalysed reaction is N-acetyl-L-glutamate 5-semialdehyde + phosphate + NADP(+) = N-acetyl-L-glutamyl 5-phosphate + NADPH + H(+). It participates in amino-acid biosynthesis; L-arginine biosynthesis; N(2)-acetyl-L-ornithine from L-glutamate: step 3/4. In terms of biological role, catalyzes the NADPH-dependent reduction of N-acetyl-5-glutamyl phosphate to yield N-acetyl-L-glutamate 5-semialdehyde. In Rhodospirillum rubrum (strain ATCC 11170 / ATH 1.1.1 / DSM 467 / LMG 4362 / NCIMB 8255 / S1), this protein is N-acetyl-gamma-glutamyl-phosphate reductase.